Reading from the N-terminus, the 473-residue chain is Ornithine decarboxylase (473 aa).

Residue Lys106 is modified to N6-(pyridoxal phosphate)lysine. Residues Ser240, Gly277, and 313 to 316 (EPGR) each bind pyridoxal 5'-phosphate. 367–368 (FD) is a substrate binding site. Catalysis depends on Cys417, which acts as the Proton donor; shared with dimeric partner. Asp418 provides a ligand contact to substrate. Tyr447 is a pyridoxal 5'-phosphate binding site.

Belongs to the Orn/Lys/Arg decarboxylase class-II family. In terms of assembly, homodimer. Only the dimer is catalytically active, as the active sites are constructed of residues from both monomers. The cofactor is pyridoxal 5'-phosphate.

Its subcellular location is the cytoplasm. It carries out the reaction L-ornithine + H(+) = putrescine + CO2. Its pathway is amine and polyamine biosynthesis; putrescine biosynthesis via L-ornithine pathway; putrescine from L-ornithine: step 1/1. Inhibited by antizyme (AZ) OAZ1 in response to polyamine levels. AZ inhibits the assembly of the functional homodimer by binding to ODC monomers and targeting them for ubiquitin-independent proteolytic destruction by the 26S proteasome. Functionally, catalyzes the first and rate-limiting step of polyamine biosynthesis that converts ornithine into putrescine, which is the precursor for the polyamines, spermidine and spermine. Polyamines are essential for cell proliferation and are implicated in cellular processes, ranging from DNA replication to apoptosis. In Candida albicans (strain SC5314 / ATCC MYA-2876) (Yeast), this protein is Ornithine decarboxylase (SPE1).